Consider the following 952-residue polypeptide: Glycine dehydrogenase (decarboxylating) (952 aa).

Lysine 703 carries the post-translational modification N6-(pyridoxal phosphate)lysine.

This sequence belongs to the GcvP family. The glycine cleavage system is composed of four proteins: P, T, L and H. Pyridoxal 5'-phosphate is required as a cofactor.

The enzyme catalyses N(6)-[(R)-lipoyl]-L-lysyl-[glycine-cleavage complex H protein] + glycine + H(+) = N(6)-[(R)-S(8)-aminomethyldihydrolipoyl]-L-lysyl-[glycine-cleavage complex H protein] + CO2. The glycine cleavage system catalyzes the degradation of glycine. The P protein binds the alpha-amino group of glycine through its pyridoxal phosphate cofactor; CO(2) is released and the remaining methylamine moiety is then transferred to the lipoamide cofactor of the H protein. In Mycolicibacterium gilvum (strain PYR-GCK) (Mycobacterium gilvum (strain PYR-GCK)), this protein is Glycine dehydrogenase (decarboxylating).